The sequence spans 439 residues: GTPase Obg (439 aa).

The Obg domain maps to 5–164 (TDFFDQATIV…LTLELELKML (160 aa)). Residues 165–335 (ADVGLVGFPN…LLQRVAELLR (171 aa)) enclose the OBG-type G domain. Residues 171 to 178 (GFPNAGKS), 196 to 200 (FTTLT), 217 to 220 (DIPG), 287 to 290 (NKAD), and 316 to 318 (SAA) each bind GTP. Mg(2+) is bound by residues Ser178 and Thr198. The interval 337 to 359 (DPPPQRDPVDPDEPPLEWPLPPV) is disordered. Residues 356 to 433 (LPPVDENAFT…IGRAELVWDD (78 aa)) enclose the OCT domain.

This sequence belongs to the TRAFAC class OBG-HflX-like GTPase superfamily. OBG GTPase family. Monomer. Mg(2+) serves as cofactor.

It localises to the cytoplasm. Its function is as follows. An essential GTPase which binds GTP, GDP and possibly (p)ppGpp with moderate affinity, with high nucleotide exchange rates and a fairly low GTP hydrolysis rate. Plays a role in control of the cell cycle, stress response, ribosome biogenesis and in those bacteria that undergo differentiation, in morphogenesis control. This Chloroflexus aggregans (strain MD-66 / DSM 9485) protein is GTPase Obg.